Reading from the N-terminus, the 147-residue chain is Globin, major polymeric component P1 (147 aa).

Residues 2 to 146 (HLTADQVAAL…ISDACIAGLQ (145 aa)) form the Globin domain. His96 lines the heme b pocket.

This sequence belongs to the globin family. In terms of assembly, polymer.

This Glycera dibranchiata (Bloodworm) protein is Globin, major polymeric component P1.